A 429-amino-acid chain; its full sequence is 26S proteasome regulatory subunit 6A homolog (429 aa).

The segment at 1-21 (MSSPPPAAAAAMAVDDADDDQ) is disordered. 217–224 (GPPGTGKT) contributes to the ATP binding site.

Belongs to the AAA ATPase family.

The protein localises to the cytoplasm. Its subcellular location is the nucleus. In terms of biological role, the 26S proteasome is involved in the ATP-dependent degradation of ubiquitinated proteins. The regulatory (or ATPase) complex confers ATP dependency and substrate specificity to the 26S complex. The protein is 26S proteasome regulatory subunit 6A homolog (TBP1) of Oryza sativa subsp. japonica (Rice).